A 416-amino-acid polypeptide reads, in one-letter code: Pigment epithelium-derived factor (416 aa).

Positions 1–20 (MQALVLLLWTGALLGFGRCQ) are cleaved as a signal peptide. Phosphoserine is present on residues serine 112 and serine 225. Asparagine 283 is a glycosylation site (N-linked (GlcNAc...) asparagine).

The protein belongs to the serpin family. As to quaternary structure, interacts with PNPLA2; this interaction stimulates the phospholipase A2 activity of PNPLA2. As to expression, retinal pigment epithelial cells. Located in the interphotoreceptor matrix (IPM) which is between the retinal pigment epithelium and the neural retina.

The protein resides in the secreted. It localises to the melanosome. Its function is as follows. Neurotrophic protein; induces extensive neuronal differentiation in retinoblastoma cells. Potent inhibitor of angiogenesis. As it does not undergo the S (stressed) to R (relaxed) conformational transition characteristic of active serpins, it exhibits no serine protease inhibitory activity. The polypeptide is Pigment epithelium-derived factor (SERPINF1) (Bos taurus (Bovine)).